Reading from the N-terminus, the 67-residue chain is Large ribosomal subunit protein uL29 (67 aa).

The protein belongs to the universal ribosomal protein uL29 family.

In Polaromonas naphthalenivorans (strain CJ2), this protein is Large ribosomal subunit protein uL29.